The following is a 281-amino-acid chain: ATP phosphoribosyltransferase (281 aa).

Belongs to the ATP phosphoribosyltransferase family. Long subfamily. Mg(2+) is required as a cofactor.

The protein localises to the cytoplasm. It catalyses the reaction 1-(5-phospho-beta-D-ribosyl)-ATP + diphosphate = 5-phospho-alpha-D-ribose 1-diphosphate + ATP. It functions in the pathway amino-acid biosynthesis; L-histidine biosynthesis; L-histidine from 5-phospho-alpha-D-ribose 1-diphosphate: step 1/9. With respect to regulation, feedback inhibited by histidine. Functionally, catalyzes the condensation of ATP and 5-phosphoribose 1-diphosphate to form N'-(5'-phosphoribosyl)-ATP (PR-ATP). Has a crucial role in the pathway because the rate of histidine biosynthesis seems to be controlled primarily by regulation of HisG enzymatic activity. The polypeptide is ATP phosphoribosyltransferase (Corynebacterium diphtheriae (strain ATCC 700971 / NCTC 13129 / Biotype gravis)).